We begin with the raw amino-acid sequence, 236 residues long: LexA repressor (236 aa).

The interval M1–S25 is disordered. A DNA-binding region (H-T-H motif) is located at residues I51–R71. Residues S160 and K197 each act as for autocatalytic cleavage activity in the active site.

The protein belongs to the peptidase S24 family. In terms of assembly, homodimer.

It catalyses the reaction Hydrolysis of Ala-|-Gly bond in repressor LexA.. In terms of biological role, represses a number of genes involved in the response to DNA damage (SOS response), including recA and lexA. In the presence of single-stranded DNA, RecA interacts with LexA causing an autocatalytic cleavage which disrupts the DNA-binding part of LexA, leading to derepression of the SOS regulon and eventually DNA repair. In Mycobacterium tuberculosis (strain ATCC 25177 / H37Ra), this protein is LexA repressor.